The chain runs to 718 residues: Catalase-peroxidase (718 aa).

Positions 98 to 219 form a cross-link, tryptophyl-tyrosyl-methioninium (Trp-Tyr) (with M-245); it reads WHAAGTYRMG…LAATEMGLIY (122 aa). H99 (proton acceptor) is an active-site residue. Positions 219–245 form a cross-link, tryptophyl-tyrosyl-methioninium (Tyr-Met) (with W-98); sequence YVNPEGPQASGDPRSAAPFIRATFGNM. Residue H260 participates in heme b binding.

Belongs to the peroxidase family. Peroxidase/catalase subfamily. As to quaternary structure, homodimer or homotetramer. It depends on heme b as a cofactor. In terms of processing, formation of the three residue Trp-Tyr-Met cross-link is important for the catalase, but not the peroxidase activity of the enzyme.

The catalysed reaction is H2O2 + AH2 = A + 2 H2O. The enzyme catalyses 2 H2O2 = O2 + 2 H2O. Functionally, bifunctional enzyme with both catalase and broad-spectrum peroxidase activity. In Acinetobacter baumannii (strain ATCC 17978 / DSM 105126 / CIP 53.77 / LMG 1025 / NCDC KC755 / 5377), this protein is Catalase-peroxidase.